Here is a 285-residue protein sequence, read N- to C-terminus: ATP phosphoribosyltransferase (285 aa).

This sequence belongs to the ATP phosphoribosyltransferase family. Long subfamily. The cofactor is Mg(2+).

Its subcellular location is the cytoplasm. It catalyses the reaction 1-(5-phospho-beta-D-ribosyl)-ATP + diphosphate = 5-phospho-alpha-D-ribose 1-diphosphate + ATP. Its pathway is amino-acid biosynthesis; L-histidine biosynthesis; L-histidine from 5-phospho-alpha-D-ribose 1-diphosphate: step 1/9. Feedback inhibited by histidine. Catalyzes the condensation of ATP and 5-phosphoribose 1-diphosphate to form N'-(5'-phosphoribosyl)-ATP (PR-ATP). Has a crucial role in the pathway because the rate of histidine biosynthesis seems to be controlled primarily by regulation of HisG enzymatic activity. This chain is ATP phosphoribosyltransferase, found in Sulfolobus acidocaldarius (strain ATCC 33909 / DSM 639 / JCM 8929 / NBRC 15157 / NCIMB 11770).